Reading from the N-terminus, the 82-residue chain is Small ribosomal subunit protein bS18 (82 aa).

The protein belongs to the bacterial ribosomal protein bS18 family. In terms of assembly, part of the 30S ribosomal subunit. Forms a tight heterodimer with protein bS6.

Functionally, binds as a heterodimer with protein bS6 to the central domain of the 16S rRNA, where it helps stabilize the platform of the 30S subunit. The chain is Small ribosomal subunit protein bS18 from Bartonella bacilliformis (strain ATCC 35685 / KC583 / Herrer 020/F12,63).